The primary structure comprises 213 residues: MRKHQLPILPLLRDDLPLDTVELARFMIGKYLVHDLPEGRMSGRIVETEAYPLGDSTSHAFMGRRPHNGSMFLAPGHAYVRLTYGLSYMLNMSAEAEEVGAGILLRAIEPLEGLPLIEARRPGVPLRDLARGPGRLTMAFGVGPSFDGWDLCSGQGLWIGVIERGEVPVGVTTRIGLSREMHQPLRFFEPGSAFVSGPRKLLVTPQSGAPKRA.

The protein belongs to the DNA glycosylase MPG family.

The polypeptide is Putative 3-methyladenine DNA glycosylase (Paraburkholderia phytofirmans (strain DSM 17436 / LMG 22146 / PsJN) (Burkholderia phytofirmans)).